The primary structure comprises 1018 residues: Collagen, type I, alpha 1a (1018 aa).

Positions 1-10 are enriched in basic and acidic residues; the sequence is QMSAGYDDKS. Positions 1-991 are disordered; sequence QMSAGYDDKS…SGEYWLDPDQ (991 aa). Residues 13–30 show a composition bias toward pro residues; that stretch reads MPVPGPMGPMGPRGPPGS. Residues 31–58 are compositionally biased toward low complexity; the sequence is PGASGPQGFTGPPGEPGEAGPSGAMGPR. Positions 67–81 are enriched in basic and acidic residues; sequence NGEDGESGKPGRGGE. Residues 126-136 are compositionally biased toward low complexity; that stretch reads PRGNDGAAGAA. Pro residues predominate over residues 138–151; sequence PPGPTGPAGPPGFP. Residues 152–170 are compositionally biased toward gly residues; sequence GGPGAKGDAGAQGGRGPEG. Low complexity-rich tracts occupy residues 171–214 and 223–261; these read PAGA…AGAP and SGPQ…APGV. Residues 284 to 296 show a composition bias toward gly residues; it reads GARGGPGGRGFPG. Composition is skewed to low complexity over residues 370 to 385, 424 to 442, 452 to 510, and 543 to 558; these read VGAR…PGPK, AGPA…PGFQ, LPGE…QGMP, and RGLT…AGAT. Gly residues predominate over residues 568-577; that stretch reads GPVGPGGARG. 2 stretches are compositionally biased toward low complexity: residues 591 to 627 and 641 to 663; these read AGFA…AGPT and PKGA…AGRV. Residues 665–677 are compositionally biased toward pro residues; that stretch reads PPGPSGNPGPPGP. Low complexity-rich tracts occupy residues 701–746 and 775–795; these read EVGA…XXPG and PGLA…NEGS. A compositionally biased stretch (pro residues) spans 819 to 829; that stretch reads APGPPGAPGPV. Residues 843 to 862 are compositionally biased toward low complexity; it reads PAGPAGSAGPAGPRGPAGAP. Over residues 865–876 the composition is skewed to basic and acidic residues; it reads RGDKGESGEAGE. Low complexity predominate over residues 889–925; the sequence is SGSSGEQGPAGAAGPAGPRGPAGSAGSPGKDGMSGLP. The Fibrillar collagen NC1 domain maps to 932-1018; sequence GPRGGFDLGF…CTSHTGTWGK (87 aa). The span at 948–959 shows a compositional bias: basic and acidic residues; the sequence is KAPDPFRDRDLE. Residues 963-973 are compositionally biased toward polar residues; sequence TLKSLSQQLEQ.

It belongs to the fibrillar collagen family.

Its subcellular location is the secreted. The protein localises to the extracellular space. It localises to the extracellular matrix. This Epinephelus costae (Goldblotch grouper) protein is Collagen, type I, alpha 1a.